Reading from the N-terminus, the 136-residue chain is Immunoglobulin J chain (136 aa).

Intrachain disulfides connect Cys12–Cys100, Cys71–Cys91, and Cys108–Cys133. A glycan (N-linked (GlcNAc...) (complex) asparagine) is linked at Asn48.

Part of the secretory IgA (sIgA) complex that consists of two, four or five IgA monomers, and two additional non-Ig polypeptides, namely the JCHAIN and the secretory component (the proteolytic product of PIGR). Part of the secretory IgM (sIgM) complex that consist of five IgM monomers, and two additional non-Ig polypeptides, namely the JCHAIN and the secretory component (the proteolytic product of PIGR). JCHAIN-containing IgM interacts (via CH4 domain) with FCRM (via Ig-like domain).

It is found in the secreted. Serves to link two monomer units of either IgM or IgA. In the case of IgM, the J chain-joined dimer is a nucleating unit for the IgM pentamer, and in the case of IgA it induces dimers and/or larger polymers. It also helps to bind these immunoglobulins to secretory component. This Oryctolagus cuniculus (Rabbit) protein is Immunoglobulin J chain.